The primary structure comprises 123 residues: Large ribosomal subunit protein uL14 (123 aa).

This sequence belongs to the universal ribosomal protein uL14 family. As to quaternary structure, part of the 50S ribosomal subunit. Forms a cluster with proteins L3 and L19. In the 70S ribosome, L14 and L19 interact and together make contacts with the 16S rRNA in bridges B5 and B8.

In terms of biological role, binds to 23S rRNA. Forms part of two intersubunit bridges in the 70S ribosome. The sequence is that of Large ribosomal subunit protein uL14 from Aliivibrio salmonicida (strain LFI1238) (Vibrio salmonicida (strain LFI1238)).